The primary structure comprises 408 residues: LL-diaminopimelate aminotransferase (408 aa).

Residues Y15 and G42 each contribute to the substrate site. Residues Y72, 108–109, Y132, N187, Y218, and 246–248 contribute to the pyridoxal 5'-phosphate site; these read SK and SFS. The substrate site is built by K109, Y132, and N187. K249 is subject to N6-(pyridoxal phosphate)lysine. The pyridoxal 5'-phosphate site is built by R257 and N292. Residues N292 and R388 each contribute to the substrate site.

Belongs to the class-I pyridoxal-phosphate-dependent aminotransferase family. LL-diaminopimelate aminotransferase subfamily. Homodimer. The cofactor is pyridoxal 5'-phosphate.

The catalysed reaction is (2S,6S)-2,6-diaminopimelate + 2-oxoglutarate = (S)-2,3,4,5-tetrahydrodipicolinate + L-glutamate + H2O + H(+). It participates in amino-acid biosynthesis; L-lysine biosynthesis via DAP pathway; LL-2,6-diaminopimelate from (S)-tetrahydrodipicolinate (aminotransferase route): step 1/1. Involved in the synthesis of meso-diaminopimelate (m-DAP or DL-DAP), required for both lysine and peptidoglycan biosynthesis. Catalyzes the direct conversion of tetrahydrodipicolinate to LL-diaminopimelate. The sequence is that of LL-diaminopimelate aminotransferase from Prochlorococcus marinus (strain MIT 9301).